We begin with the raw amino-acid sequence, 60 residues long: Toxin TdNa2 (60 aa).

The LCN-type CS-alpha/beta domain occupies 1–59 (RDAYPADWRGCKPSCPWGSSSWCNEECTSLGGSSGYCAWPACWCYGLPDSVRYYNNKCH). 4 disulfides stabilise this stretch: cysteine 11–cysteine 58, cysteine 15–cysteine 37, cysteine 23–cysteine 42, and cysteine 27–cysteine 44.

The protein belongs to the long (4 C-C) scorpion toxin superfamily. Sodium channel inhibitor family. Beta subfamily. As to expression, expressed by the venom gland.

The protein localises to the secreted. Functionally, inhibits the sodium currents (Nav) in an apparent irreversible manner. Produces small depolarization and induces repetitive firing in squid axons. Is specific for arthropods (crickets, triatomides, crabs and squids), but is non-toxic to mice. This is Toxin TdNa2 from Tityus discrepans (Venezuelan scorpion).